The following is a 731-amino-acid chain: Endopolyphosphatase (731 aa).

The Cytoplasmic segment spans residues 1 to 4; it reads MSLS. A helical; Signal-anchor for type II membrane protein transmembrane segment spans residues 5 to 25; that stretch reads RCILGLACLWHGVIASPLGAV. Topologically, residues 26–731 are vacuolar; sequence PSNIPIATDL…VEKEDLKKFT (706 aa). Asn-106 is a glycosylation site (N-linked (GlcNAc...) asparagine). Positions 375 to 403 are disordered; that stretch reads KLQPPPTDSKNSGQLKKGKKGRKGKKKKP. Over residues 390–402 the composition is skewed to basic residues; the sequence is KKGKKGRKGKKKK. Residue Asn-433 is glycosylated (N-linked (GlcNAc...) asparagine). The interval 456–522 is disordered; the sequence is EQNDRQKHLD…PPGPAYSPQP (67 aa). Composition is skewed to basic and acidic residues over residues 457 to 474 and 492 to 501; these read QNDR…PSHM and GGDSKPKKPD. Over residues 505–519 the composition is skewed to pro residues; it reads PHPPAKSSPPGPAYS. 2 N-linked (GlcNAc...) asparagine glycosylation sites follow: Asn-534 and Asn-540. Positions 626–706 are disordered; sequence AKSIDVSYES…HKKKKGKKRQ (81 aa). Residues 636–686 show a composition bias toward acidic residues; that stretch reads AAEEEEEEEEEEEEDLFEEVEETDEEEEQEDDDLSDGEEVDDDSDEDELET. Residues 691–706 show a composition bias toward basic residues; it reads KHDKKKHKKKKGKKRQ.

Belongs to the endopolyphosphatase PPN1 family. Requires a divalent metal cation as cofactor. Processing by proteases in the vacuole may be required for activation.

It localises to the vacuole membrane. The catalysed reaction is [phosphate](n+1) + n H2O = (n+1) phosphate + n H(+). Its function is as follows. Catalyzes the hydrolysis of inorganic polyphosphate (polyP) chains of many hundreds of phosphate residues into shorter lengths. This Neurospora crassa (strain ATCC 24698 / 74-OR23-1A / CBS 708.71 / DSM 1257 / FGSC 987) protein is Endopolyphosphatase (epp-1).